Consider the following 114-residue polypeptide: T cell receptor alpha variable 3 (114 aa).

Residues 1-20 (MASAPISMLAMLFTLSGLRA) form the signal peptide. The region spanning 21–114 (QSVAQPEDQV…SALYFCAVRD (94 aa)) is the Ig-like domain. A disulfide bridge links cysteine 42 with cysteine 110. An N-linked (GlcNAc...) asparagine glycan is attached at asparagine 87.

In terms of assembly, alpha-beta TR is a heterodimer composed of an alpha and beta chain; disulfide-linked. The alpha-beta TR is associated with the transmembrane signaling CD3 coreceptor proteins to form the TR-CD3 (TcR or TCR). The assembly of alpha-beta TR heterodimers with CD3 occurs in the endoplasmic reticulum where a single alpha-beta TR heterodimer associates with one CD3D-CD3E heterodimer, one CD3G-CD3E heterodimer and one CD247 homodimer forming a stable octameric structure. CD3D-CD3E and CD3G-CD3E heterodimers preferentially associate with TR alpha and TR beta chains, respectively. The association of the CD247 homodimer is the last step of TcR assembly in the endoplasmic reticulum and is required for transport to the cell surface.

The protein localises to the cell membrane. Functionally, v region of the variable domain of T cell receptor (TR) alpha chain that participates in the antigen recognition. Alpha-beta T cell receptors are antigen specific receptors which are essential to the immune response and are present on the cell surface of T lymphocytes. Recognize peptide-major histocompatibility (MH) (pMH) complexes that are displayed by antigen presenting cells (APC), a prerequisite for efficient T cell adaptive immunity against pathogens. Binding of alpha-beta TR to pMH complex initiates TR-CD3 clustering on the cell surface and intracellular activation of LCK that phosphorylates the ITAM motifs of CD3G, CD3D, CD3E and CD247 enabling the recruitment of ZAP70. In turn ZAP70 phosphorylates LAT, which recruits numerous signaling molecules to form the LAT signalosome. The LAT signalosome propagates signal branching to three major signaling pathways, the calcium, the mitogen-activated protein kinase (MAPK) kinase and the nuclear factor NF-kappa-B (NF-kB) pathways, leading to the mobilization of transcription factors that are critical for gene expression and essential for T cell growth and differentiation. The T cell repertoire is generated in the thymus, by V-(D)-J rearrangement. This repertoire is then shaped by intrathymic selection events to generate a peripheral T cell pool of self-MH restricted, non-autoaggressive T cells. Post-thymic interaction of alpha-beta TR with the pMH complexes shapes TR structural and functional avidity. The chain is T cell receptor alpha variable 3 from Homo sapiens (Human).